The primary structure comprises 363 residues: Neutral protease 2 homolog MEP7 (363 aa).

The first 19 residues, 1-19 (MLLCSMVAALAALATPAFS), serve as a signal peptide directing secretion. Residues 20-181 (CALPHLDLPE…ARAIQPLDRR (162 aa)) constitute a propeptide that is removed on maturation. Disulfide bonds link Cys187/Cys259 and Cys266/Cys284. Zn(2+) is bound at residue His308. Glu309 is an active-site residue. His312 and Asp323 together coordinate Zn(2+).

It belongs to the peptidase M35 family. Zn(2+) serves as cofactor.

It localises to the secreted. It catalyses the reaction Preferential cleavage of bonds with hydrophobic residues in P1'. Also 3-Asn-|-Gln-4 and 8-Gly-|-Ser-9 bonds in insulin B chain.. Functionally, secreted metalloproteinase that allows assimilation of proteinaceous substrates. Shows high activities on basic nuclear substrates such as histone and protamine. May be involved in virulence. This chain is Neutral protease 2 homolog MEP7 (MEP7), found in Coccidioides posadasii (strain C735) (Valley fever fungus).